Reading from the N-terminus, the 280-residue chain is UDP-3-O-acyl-N-acetylglucosamine deacetylase (280 aa).

The Zn(2+) site is built by His-79, His-237, and Asp-241. His-264 serves as the catalytic Proton donor.

This sequence belongs to the LpxC family. Requires Zn(2+) as cofactor.

It catalyses the reaction a UDP-3-O-[(3R)-3-hydroxyacyl]-N-acetyl-alpha-D-glucosamine + H2O = a UDP-3-O-[(3R)-3-hydroxyacyl]-alpha-D-glucosamine + acetate. It functions in the pathway glycolipid biosynthesis; lipid IV(A) biosynthesis; lipid IV(A) from (3R)-3-hydroxytetradecanoyl-[acyl-carrier-protein] and UDP-N-acetyl-alpha-D-glucosamine: step 2/6. In terms of biological role, catalyzes the hydrolysis of UDP-3-O-myristoyl-N-acetylglucosamine to form UDP-3-O-myristoylglucosamine and acetate, the committed step in lipid A biosynthesis. This chain is UDP-3-O-acyl-N-acetylglucosamine deacetylase, found in Chlamydia caviae (strain ATCC VR-813 / DSM 19441 / 03DC25 / GPIC) (Chlamydophila caviae).